Reading from the N-terminus, the 157-residue chain is MNTIVGTYECKVDSKGRLMMPNPLKKQLNVSLQEGFVLKRSVFQQCLELYPMKEWDLMMQKINKLNRFVKKNNDFIRRFTAGVRIIEIDATGRLLIPKDLAVFASVTKDIVLSSAVNIIEIWDKDLYEKAIDDSVGDFADLAEEVMGNVNDDEYGIS.

SpoVT-AbrB domains follow at residues Thr-7–Glu-54 and Val-83–Leu-126.

Belongs to the MraZ family. Forms oligomers.

Its subcellular location is the cytoplasm. It localises to the nucleoid. In Flavobacterium psychrophilum (strain ATCC 49511 / DSM 21280 / CIP 103535 / JIP02/86), this protein is Transcriptional regulator MraZ.